The primary structure comprises 84 residues: Small ribosomal subunit protein bS18 (84 aa).

Belongs to the bacterial ribosomal protein bS18 family. Part of the 30S ribosomal subunit. Forms a tight heterodimer with protein bS6.

Its function is as follows. Binds as a heterodimer with protein bS6 to the central domain of the 16S rRNA, where it helps stabilize the platform of the 30S subunit. This Mycobacterium leprae (strain Br4923) protein is Small ribosomal subunit protein bS18.